The primary structure comprises 672 residues: Outer dynein arm-docking complex subunit 4 (672 aa).

8 TPR repeats span residues 13 to 46 (FPSYMAEGERLYLCGEFSKAAQSFSNALYLQDGD), 48 to 80 (NCLVARSKCFLKMGDLERSLKDAEASLQSDPAF), 81 to 114 (CKGILQKAETLYTMGDFEFALVFYHRGYKLRPDR), 275 to 311 (LKSLEDIDMLLTSGSAEGSLQKAEKVLKKVLEWNKEE), 320 to 353 (GNLYSCIGNAQIELGQMEAALQSHRKDLEIAKEY), 360 to 393 (SRALDNIGRVFARVGKFQQAIDTWEEKIPLAKTT), 397 to 430 (TWLFHEIGRCYLELDQAWQAQNYGEKSQQCAEEE), and 437 to 470 (LNASVLVAQAQVKLRDFESAVNNFEKALERAKLV). Residues 527-544 (RVRDEPEKVVKQWDHSED) show a composition bias toward basic and acidic residues. A disordered region spans residues 527 to 672 (RVRDEPEKVV…TGNEMEKEYE (146 aa)). Acidic residues predominate over residues 545 to 555 (EKETDEDDEAF). Composition is skewed to basic and acidic residues over residues 595–650 (ETGR…EELG) and 658–672 (GETKKTGNEMEKEYE).

Component of the outer dynein arm-docking complex along with ODAD1, ODAD2 and ODAD3. Interacts with ODAD1; this interaction may facilitate the recruitment and/or attachment of outer dynein arm docking complex proteins, including ODAD1, ODAD3 and ODAD2, to ciliary axonemes. Interacts with components of the IFT complex A, including IFT140, TTC21B/IFT139 and WDR19/IFT144, and the IFT complex B, including IFT46, IFT52 and IFT57. Interacts with CFAP53. As to expression, expressed in the nasal mucosa (at protein level).

It localises to the cytoplasm. The protein resides in the cytoskeleton. The protein localises to the cilium axoneme. Its function is as follows. Component of the outer dynein arm-docking complex (ODA-DC) that mediates outer dynein arms (ODA) binding onto the doublet microtubule. Plays an essential role for the assembly of ODA-DC and for the docking of ODA in ciliary axoneme. This chain is Outer dynein arm-docking complex subunit 4, found in Homo sapiens (Human).